A 252-amino-acid chain; its full sequence is Phosphosulfolactate synthase (252 aa).

It belongs to the phosphosulfolactate synthase family.

It carries out the reaction (2R)-O-phospho-3-sulfolactate = phosphoenolpyruvate + sulfite + H(+). In terms of biological role, catalyzes the addition of sulfite to phosphoenolpyruvate (PEP) to yield (2R)-phospho-3-sulfolactate (PSL). Is probably involved in the biosynthesis of L-sulfolactate, which is a major constituent of sporulating cells and mature spores. The chain is Phosphosulfolactate synthase (yitD) from Bacillus subtilis (strain 168).